Consider the following 198-residue polypeptide: Holliday junction branch migration complex subunit RuvA (198 aa).

The interval 1 to 63 is domain I; the sequence is MYDYIKGQLT…EDAHLLFGFH (63 aa). Residues 64-142 are domain II; that stretch reads TEDEKDVFLK…EAPQETGHTK (79 aa). Residues 143-147 are flexible linker; sequence ARSNK. The tract at residues 148–198 is domain III; sequence AGNTQLDEAIEALLALGYKATELKKIRAFFEGTSETAEQYIKSALKLLMKG.

The protein belongs to the RuvA family. In terms of assembly, homotetramer. Forms an RuvA(8)-RuvB(12)-Holliday junction (HJ) complex. HJ DNA is sandwiched between 2 RuvA tetramers; dsDNA enters through RuvA and exits via RuvB. An RuvB hexamer assembles on each DNA strand where it exits the tetramer. Each RuvB hexamer is contacted by two RuvA subunits (via domain III) on 2 adjacent RuvB subunits; this complex drives branch migration. In the full resolvosome a probable DNA-RuvA(4)-RuvB(12)-RuvC(2) complex forms which resolves the HJ.

The protein localises to the cytoplasm. Its function is as follows. The RuvA-RuvB-RuvC complex processes Holliday junction (HJ) DNA during genetic recombination and DNA repair, while the RuvA-RuvB complex plays an important role in the rescue of blocked DNA replication forks via replication fork reversal (RFR). RuvA specifically binds to HJ cruciform DNA, conferring on it an open structure. The RuvB hexamer acts as an ATP-dependent pump, pulling dsDNA into and through the RuvAB complex. HJ branch migration allows RuvC to scan DNA until it finds its consensus sequence, where it cleaves and resolves the cruciform DNA. The protein is Holliday junction branch migration complex subunit RuvA of Streptococcus pyogenes serotype M6 (strain ATCC BAA-946 / MGAS10394).